Consider the following 109-residue polypeptide: Aquaporin-2 (109 aa).

At 1–6 (SIAFSK) the chain is on the cytoplasmic side. The chain crosses the membrane as a helical span at residues 7 to 27 (AVFSEFLATLLFVFFGLGSAL). Topologically, residues 28-35 (NWPQALPS) are extracellular. A helical membrane pass occupies residues 36 to 54 (GLQIAMAFGLAIGTLVQTL). Over 55–59 (GHISG) the chain is Cytoplasmic. Residues 60 to 69 (AHINPAVTVA) constitute an intramembrane region (discontinuously helical). The short motif at 63–65 (NPA) is the NPA 1 element. At 70-80 (CLVGCHVSFLR) the chain is on the cytoplasmic side. The chain crosses the membrane as a helical span at residues 81–102 (AIFYVAAQLLGAVAGAALLHEL). Residues 103–109 (TPPDIRG) are Extracellular-facing.

Belongs to the MIP/aquaporin (TC 1.A.8) family. Homotetramer. In terms of processing, serine phosphorylation is necessary and sufficient for expression at the apical membrane. Endocytosis is not phosphorylation-dependent. N-glycosylated.

It localises to the apical cell membrane. Its subcellular location is the basolateral cell membrane. The protein localises to the cell membrane. It is found in the cytoplasmic vesicle membrane. The protein resides in the golgi apparatus. It localises to the trans-Golgi network membrane. The catalysed reaction is H2O(in) = H2O(out). The enzyme catalyses glycerol(in) = glycerol(out). Forms a water-specific channel that provides the plasma membranes of renal collecting duct with high permeability to water, thereby permitting water to move in the direction of an osmotic gradient. Plays an essential role in renal water homeostasis. Could also be permeable to glycerol. The sequence is that of Aquaporin-2 from Orycteropus afer (Aardvark).